Here is a 2335-residue protein sequence, read N- to C-terminus: MEYFSDLKNKNESIQLAAADQLKEFVHSSTKELSGESLARFNNDINRRIFELIHSHDSHERFGGILAIGKLIEFESEGDVTNLSRYANYLRMTLPSTDWHSMELSAKVLGHLAASGGTLAAEFVEFEVQRAFEWLQGDRQEQKRMAAILIIKALAQNSPTLVYLYISEIFQNLWTGLRDPKPLIRETAADALGASLDVVCQREAKVQLQCFNEVLLQAEHGLRQSSVEYLHGSLLAYKELFEKSGSFIREHYTEFCDLALRLREHRDNSIRRCIVFLLPTLSEYNPKKFQQRYLDSFMVYLLSHIRKDKEKSLAFEAIGRIAMAVNEAMIPYLQNILKVIRDTLTAKVREKTQYEKPVFECIGMLAAAVKLELLEDSRSLLGLIFSCELSVHLRQALVKMAENIPPLLAPIQERLLNMVSQILTGKNFEIRTNDTYTPSFTNIYSAREPDQRSKSTESIILALETLGTFNFTGYSLISFIQESVLSYLENDNSEIRIAAARTCCQVFARDPICRKTNPLAVESVAEVLEKLLTLGIADSDPKIRETVLSLLDERFDRHLAHPDNIRCLFIALNDEVFSIREIAIIIIGRLALYNPAHVMPSLRKTIIQLLSDMEYSGNSRQKEESAQLLKLLVSKARTLIKPYIQSIIHVILPKAADTSPGVSSAIISALGELASVEGEDMPVDVRGSFMKLILVNLQDQSSTLKRLASLKCLRKLCGRSGYVIQPYLDYPPLLGALIGILQSEQPTPIRREVLRTLGVLGALDPYTYLTTEEVSDDLQSSHNNAHGVPQISAAQYPSLENYAMVAVVTLIGILKDSSLSMHHSSVVQAVMHICSQMGSKSTVFLPQVVPTFLQVMQSLSASSAEFYFQQLTTLTSIIGPNIRDYVSDIFNLSKVFWESTTSLLLVILELIDAIAIALQDEFKFYLPQILSCMLKAFSLDNTSSRSVSYKVLQSFVIFGSNIEEYMHLVLPVIIRSFERDTIPLGFRKSALKCIAQLFQSVNFSDHASRIIHPLVRMLGKSNGDLRAVIMDTLCAIVSQLGYDYSIFIPMVNKVLVSHKISHPAYELLVSRLLKGEPLPKDVVVKEFKPRPSTKPFSTQDEVLTKLPVDQASLKAAWESSQKLTRDDWQDWIRRISIELLKESPSSALRSCSTLAGIYHPLARDLFNVSFLSCWDELTESNKKNLVKSIELAMNAPNISVEILQTLLNLAEYMEREDHTLPIPIKVISAHASKCNVYAKALHYTELQFVQETKEEVSISTIESLITINNHLQQSDAAVGMLQYTKEHKQFSLKETWYEKLHRWDDALAAYEHREREGDSSFEINIGKLRCYYALGDWDHLSELAQKAWVTSEQEHREAIAPLAAAAAWGLGQWNLISEYVSAMDRDPQDKEFFSAISAVHLGQYNKAYGHIERHRDILVNDLSSIIGESYNRAYGIMVKSQMLSELEEIIDYKKNMQYENNLDSLKKTWRKRLEGCQKNVDVWHNTLRFRALVLSPQDSPEMWIKLADLCRRSDRLKLSNQCLTYLMGRDPSNAYPLDSLKLLNPHVVYTYLKYLWATDQKNIAVSELEEFTSYLSSKHGYKMGDSSKLVDILASSSVSSEERSFLARCFHKLGKWKKSLQDSVNQESVRDILNCYFYATLFDKSWYKAWHSWALANFEVVGYYEQTEHGVTQDMYEQYIVPAIKGFFHSSVLNQKNSLQDILRLLNLWFKFGEHSDVAAAIVEGFSNVPMDTWLEVIPQLIARIHTSSSSVRASVHQLLSDIGRVHPQALVYSLTVSSKSTNPQQKHSAKSIMDSMLSHSDTLVRQALLVSQELIRVAILWHELWYEGLEEASQAYFSDHDISLMIDIVKPLHETLEKGPSTLSEISFAQTFGYDLRKARSYWQKFLQDGDPTELNQSWDLYYQVFRRIQKQLPRIKHLELQYVSPKLLDACDLELAVPGTYGHNKPVIRISHFHHTFEVISSKQRPRRLTIHGSDGKDYQYVLKGHEDLRQDERVMQLFGLCNTLLTTDSETFKRRLNIERYTVIPLSPNSGLLGWVPHSDTLHFLIKEFRSKRNILLNLEHRMMLQMAPDCDSLTLLQKLEVFEYVMANTDGYDLYHVLWLKSRSSEAWLDRRTSYTQSLAVMSMVGYILGLGDRHPSNLMMDRYSGKIIHIDFGDCFEVAMHREKFPEKIPFRLTRMLINAMEVSGIQGTYKITCELVMRVLRSNTESLMAVLEAFVYDPLINWRLMTKSSFGASTTLRPTSSSVEEKGRSYTHRARHADYAALSETNGVNAEGLNERSIQVLKRVSNKLTGKDFDLKEQLPVKAQVEKLIQQATAPENLCRCYVGWCSFW.

HEAT repeat units lie at residues 1-31 (MEYFSDLKNKNESIQLAAADQLKEFVHSSTK), 164-201 (LYISEIFQNLWTGLRDPKPLIRETAADALGASLDVVCQ), 331-371 (PYLQ…AVKL), 410-449 (PIQERLLNMVSQILTGKNFEIRTNDTYTPSFTNIYSAREP), 474-512 (YSLISFIQESVLSYLENDNSEIRIAAARTCCQVFARDPI), 522-560 (ESVAEVLEKLLTLGIADSDPKIRETVLSLLDERFDRHLA), 562-596 (PDNIRCLFIALNDEVFSIREIAIIIIGRLALYNPA), 642-679 (PYIQSIIHVILPKAADTSPGVSSAIISALGELASVEGE), 684-722 (DVRGSFMKLILVNLQDQSSTLKRLASLKCLRKLCGRSGY), 728-766 (LDYPPLLGALIGILQSEQPTPIRREVLRTLGVLGALDPY), 843-880 (VFLPQVVPTFLQVMQSLSASSAEFYFQQLTTLTSIIGP), 904-923 (LLVILELIDAIAIALQDEFK), 924-961 (FYLPQILSCMLKAFSLDNTSSRSVSYKVLQSFVIFGSN), 964-1003 (EYMHLVLPVIIRSFERDTIPLGFRKSALKCIAQLFQSVNF), and 1005-1042 (DHASRIIHPLVRMLGKSNGDLRAVIMDTLCAIVSQLGY). Residues 1226 to 1781 (VISAHASKCN…VYSLTVSSKS (556 aa)) form the FAT domain. In terms of domain architecture, PI3K/PI4K catalytic spans 1955–2269 (FHHTFEVISS…ARHADYAALS (315 aa)). A G-loop region spans residues 1961–1967 (VISSKQR). A Phosphothreonine; by PKB/AKT1 modification is found at Thr-1972. Residues 2134–2142 (GLGDRHPSN) form a catalytic loop region. Residues 2154–2179 (HIDFGDCFEVAMHREKFPEKIPFRLT) are activation loop. Residues 2303-2335 (EQLPVKAQVEKLIQQATAPENLCRCYVGWCSFW) form the FATC domain.

The protein belongs to the PI3/PI4-kinase family. In terms of assembly, the target of rapamycin complex 2 (TORC2) is composed of at least bit61, pop3/wat1, sin1, ste20 and tor1. Phosphorylation at Thr-1972 in the ATP-binding region by AKT1 strongly reduces kinase activity.

Its subcellular location is the cytoplasm. The catalysed reaction is L-seryl-[protein] + ATP = O-phospho-L-seryl-[protein] + ADP + H(+). The enzyme catalyses L-threonyl-[protein] + ATP = O-phospho-L-threonyl-[protein] + ADP + H(+). In terms of biological role, catalytic component of TORC2, which regulates multiple cellular processes to control cell growth in response to environmental signals. In response to signals, TORC2 phosphorylates AGC protein kinase family members. TORC2 is required for cell survival under various stress conditions. TORC2 positively controls G1 cell-cycle arrest, sexual development and amino acid uptake. Positively regulates amino acid uptake through the control of expression of amino acid permeases. Responsible for the phosphorylation of AGC kinase gad8 at 'Ser-527' and 'Ser-546', activating gad8 kinase activity and promoting sexual development. This Schizosaccharomyces pombe (strain 972 / ATCC 24843) (Fission yeast) protein is Serine/threonine-protein kinase tor1.